A 170-amino-acid polypeptide reads, in one-letter code: Peptide deformylase (170 aa).

2 residues coordinate Fe cation: Cys94 and His136. The active site involves Glu137. Residue His140 coordinates Fe cation.

This sequence belongs to the polypeptide deformylase family. It depends on Fe(2+) as a cofactor.

The enzyme catalyses N-terminal N-formyl-L-methionyl-[peptide] + H2O = N-terminal L-methionyl-[peptide] + formate. Removes the formyl group from the N-terminal Met of newly synthesized proteins. Requires at least a dipeptide for an efficient rate of reaction. N-terminal L-methionine is a prerequisite for activity but the enzyme has broad specificity at other positions. In Wolinella succinogenes (strain ATCC 29543 / DSM 1740 / CCUG 13145 / JCM 31913 / LMG 7466 / NCTC 11488 / FDC 602W) (Vibrio succinogenes), this protein is Peptide deformylase.